Reading from the N-terminus, the 190-residue chain is GTP cyclohydrolase 1 (190 aa).

The Zn(2+) site is built by cysteine 80, histidine 83, and cysteine 151.

The protein belongs to the GTP cyclohydrolase I family. In terms of assembly, toroid-shaped homodecamer, composed of two pentamers of five dimers.

It catalyses the reaction GTP + H2O = 7,8-dihydroneopterin 3'-triphosphate + formate + H(+). Its pathway is cofactor biosynthesis; 7,8-dihydroneopterin triphosphate biosynthesis; 7,8-dihydroneopterin triphosphate from GTP: step 1/1. The chain is GTP cyclohydrolase 1 (folE) from Rickettsia prowazekii (strain Madrid E).